We begin with the raw amino-acid sequence, 223 residues long: MPKKFQGENTKSAAARARRAEAKAAADAKKQKEPEDAYWKDDDKHVMRKEQRKEEKEKRRLDQLERKKETQRLLEEEDSKLKGGKAPRVATSSKVTRAQIEDTLRRDHQLREAPDTAEKAKSHLEVPLEENVNRRVLEEGSVEARTIEDAIAVLSVAEEAADRHPERRQRAAFTAFEEAQLPRLKQENPNMRLSQLKQLLKKEWLRSPDNPMNQRAVPFNAPK.

Residues 1–126 (MPKKFQGENT…AEKAKSHLEV (126 aa)) are disordered. 2 stretches are compositionally biased toward basic and acidic residues: residues 18–74 (RRAE…QRLL) and 99–126 (QIEDTLRRDHQLREAPDTAEKAKSHLEV). Residues 44–82 (KHVMRKEQRKEEKEKRRLDQLERKKETQRLLEEEDSKLK) are a coiled coil. A phosphoserine mark is found at S141 and S194. Residues 204-223 (WLRSPDNPMNQRAVPFNAPK) form a disordered region.

It belongs to the CCDC124 family. As to quaternary structure, associates with translationally inactive ribosomes in the nonrotated state. Interacts with RASGEF1B.

It is found in the cytoplasm. It localises to the cytoskeleton. The protein localises to the microtubule organizing center. The protein resides in the centrosome. Its subcellular location is the midbody. Functionally, ribosome-binding protein involved in ribosome hibernation: associates with translationally inactive ribosomes and stabilizes the nonrotated conformation of the 80S ribosome, thereby promoting ribosome preservation and storage. Also required for proper progression of late cytokinetic stages. The protein is Coiled-coil domain-containing protein 124 (CCDC124) of Pongo abelii (Sumatran orangutan).